The sequence spans 555 residues: Formate--tetrahydrofolate ligase (555 aa).

65–72 contacts ATP; sequence TPAGEGKS.

Belongs to the formate--tetrahydrofolate ligase family.

It catalyses the reaction (6S)-5,6,7,8-tetrahydrofolate + formate + ATP = (6R)-10-formyltetrahydrofolate + ADP + phosphate. It functions in the pathway one-carbon metabolism; tetrahydrofolate interconversion. This is Formate--tetrahydrofolate ligase from Lactococcus lactis subsp. lactis (strain IL1403) (Streptococcus lactis).